We begin with the raw amino-acid sequence, 466 residues long: Argininosuccinate lyase (466 aa).

It belongs to the lyase 1 family. Argininosuccinate lyase subfamily.

The protein resides in the cytoplasm. The enzyme catalyses 2-(N(omega)-L-arginino)succinate = fumarate + L-arginine. Its pathway is amino-acid biosynthesis; L-arginine biosynthesis; L-arginine from L-ornithine and carbamoyl phosphate: step 3/3. The protein is Argininosuccinate lyase of Bartonella bacilliformis (strain ATCC 35685 / KC583 / Herrer 020/F12,63).